Reading from the N-terminus, the 340-residue chain is 3-isopropylmalate dehydrogenase (340 aa).

Substrate contacts are provided by Arg88, Arg98, Arg122, and Asp212. 3 residues coordinate Mg(2+): Asp212, Asp236, and Asp240. 272–284 (GSAPDIMGKGIAD) lines the NAD(+) pocket.

Belongs to the isocitrate and isopropylmalate dehydrogenases family. LeuB type 2 subfamily. As to quaternary structure, homodimer. Mg(2+) is required as a cofactor. It depends on Mn(2+) as a cofactor.

It is found in the cytoplasm. It carries out the reaction (2R,3S)-3-isopropylmalate + NAD(+) = 4-methyl-2-oxopentanoate + CO2 + NADH. It participates in amino-acid biosynthesis; L-leucine biosynthesis; L-leucine from 3-methyl-2-oxobutanoate: step 3/4. In terms of biological role, catalyzes the oxidation of 3-carboxy-2-hydroxy-4-methylpentanoate (3-isopropylmalate) to 3-carboxy-4-methyl-2-oxopentanoate. The product decarboxylates to 4-methyl-2 oxopentanoate. In Corynebacterium efficiens (strain DSM 44549 / YS-314 / AJ 12310 / JCM 11189 / NBRC 100395), this protein is 3-isopropylmalate dehydrogenase.